A 1611-amino-acid polypeptide reads, in one-letter code: Pentafunctional AROM polypeptide (1611 aa).

The 3-dehydroquinate synthase stretch occupies residues 1-391 (MSSSSADVLK…YEEKASVVAD (391 aa)). Residues 47–49 (DTN), 84–87 (EGAK), 115–117 (GGV), and aspartate 120 contribute to the NAD(+) site. Arginine 131 contacts 7-phospho-2-dehydro-3-deoxy-D-arabino-heptonate. 140–141 (TT) serves as a coordination point for NAD(+). 2 residues coordinate 7-phospho-2-dehydro-3-deoxy-D-arabino-heptonate: aspartate 147 and lysine 153. Residue lysine 162 participates in NAD(+) binding. Asparagine 163 contacts 7-phospho-2-dehydro-3-deoxy-D-arabino-heptonate. NAD(+) is bound by residues 180–183 (FLTT) and asparagine 191. Residue glutamate 195 coordinates Zn(2+). Residues 195–198 (EVIK) and lysine 257 contribute to the 7-phospho-2-dehydro-3-deoxy-D-arabino-heptonate site. Glutamate 267 functions as the Proton acceptor; for 3-dehydroquinate synthase activity in the catalytic mechanism. Residues 271–275 (RNLVN) and histidine 278 contribute to the 7-phospho-2-dehydro-3-deoxy-D-arabino-heptonate site. Histidine 278 provides a ligand contact to Zn(2+). The Proton acceptor; for 3-dehydroquinate synthase activity role is filled by histidine 282. Residues histidine 294 and lysine 363 each contribute to the 7-phospho-2-dehydro-3-deoxy-D-arabino-heptonate site. Histidine 294 is a Zn(2+) binding site. Positions 404 to 863 (VKAATPTKSP…WDDLQNKIGV (460 aa)) are EPSP synthase. Cysteine 845 functions as the For EPSP synthase activity in the catalytic mechanism. Positions 892-1093 (DRPIFLIGMR…SVGNPTSFLS (202 aa)) are shikimate kinase. 899–906 (GMRGAGKT) is an ATP binding site. A 3-dehydroquinase region spans residues 1094–1318 (LTFPDVTPAL…AAPGQLTARE (225 aa)). Catalysis depends on histidine 1220, which acts as the Proton acceptor; for 3-dehydroquinate dehydratase activity. The Schiff-base intermediate with substrate; for 3-dehydroquinate dehydratase activity role is filled by lysine 1248. Residues 1331 to 1611 (AKKFVLFGSP…RKAVLDKYFA (281 aa)) form a shikimate dehydrogenase region.

It in the N-terminal section; belongs to the sugar phosphate cyclases superfamily. Dehydroquinate synthase family. This sequence in the 2nd section; belongs to the EPSP synthase family. The protein in the 3rd section; belongs to the shikimate kinase family. In the 4th section; belongs to the type-I 3-dehydroquinase family. It in the C-terminal section; belongs to the shikimate dehydrogenase family. In terms of assembly, homodimer. Requires Zn(2+) as cofactor.

It is found in the cytoplasm. The enzyme catalyses 7-phospho-2-dehydro-3-deoxy-D-arabino-heptonate = 3-dehydroquinate + phosphate. It carries out the reaction 3-dehydroquinate = 3-dehydroshikimate + H2O. It catalyses the reaction shikimate + NADP(+) = 3-dehydroshikimate + NADPH + H(+). The catalysed reaction is shikimate + ATP = 3-phosphoshikimate + ADP + H(+). The enzyme catalyses 3-phosphoshikimate + phosphoenolpyruvate = 5-O-(1-carboxyvinyl)-3-phosphoshikimate + phosphate. The protein operates within metabolic intermediate biosynthesis; chorismate biosynthesis; chorismate from D-erythrose 4-phosphate and phosphoenolpyruvate: step 2/7. It functions in the pathway metabolic intermediate biosynthesis; chorismate biosynthesis; chorismate from D-erythrose 4-phosphate and phosphoenolpyruvate: step 3/7. Its pathway is metabolic intermediate biosynthesis; chorismate biosynthesis; chorismate from D-erythrose 4-phosphate and phosphoenolpyruvate: step 4/7. It participates in metabolic intermediate biosynthesis; chorismate biosynthesis; chorismate from D-erythrose 4-phosphate and phosphoenolpyruvate: step 5/7. The protein operates within metabolic intermediate biosynthesis; chorismate biosynthesis; chorismate from D-erythrose 4-phosphate and phosphoenolpyruvate: step 6/7. Functionally, the AROM polypeptide catalyzes 5 consecutive enzymatic reactions in prechorismate polyaromatic amino acid biosynthesis. In Cryptococcus neoformans var. neoformans serotype D (strain B-3501A) (Filobasidiella neoformans), this protein is Pentafunctional AROM polypeptide.